Consider the following 93-residue polypeptide: Small ribosomal subunit protein uS17 (93 aa).

It belongs to the universal ribosomal protein uS17 family. Part of the 30S ribosomal subunit.

Functionally, one of the primary rRNA binding proteins, it binds specifically to the 5'-end of 16S ribosomal RNA. This chain is Small ribosomal subunit protein uS17, found in Rhodococcus erythropolis (strain PR4 / NBRC 100887).